Reading from the N-terminus, the 162-residue chain is UPF0460 protein y4xD (162 aa).

It belongs to the UPF0460 family.

The sequence is that of UPF0460 protein y4xD from Sinorhizobium fredii (strain NBRC 101917 / NGR234).